We begin with the raw amino-acid sequence, 331 residues long: GTPase Obg (331 aa).

The 159-residue stretch at Met1–Leu159 folds into the Obg domain. Residues Ala160–Gly328 enclose the OBG-type G domain. GTP is bound by residues Gly166–Ser173, Phe191–Val195, Asp213–Gly216, Ser280–Glu283, and Ser309–Val311. Residues Ser173 and Thr193 each contribute to the Mg(2+) site.

Belongs to the TRAFAC class OBG-HflX-like GTPase superfamily. OBG GTPase family. In terms of assembly, monomer. The cofactor is Mg(2+).

It is found in the cytoplasm. An essential GTPase which binds GTP, GDP and possibly (p)ppGpp with moderate affinity, with high nucleotide exchange rates and a fairly low GTP hydrolysis rate. Plays a role in control of the cell cycle, stress response, ribosome biogenesis and in those bacteria that undergo differentiation, in morphogenesis control. This Synechococcus sp. (strain RCC307) protein is GTPase Obg.